A 2344-amino-acid chain; its full sequence is MRGPHGVSWRVPWLCLSCLCSCLLLLPVNTSTTSAPKTSTALPSSTNPSQMTSQVSNPTASSYRMTKNTGQASPMVTSSSITTLPQSQHTGSMKTTRNPQTTGTTEVTTTLSASSSDQVQVETTSQTTLSPDTTTTSHAPRESSSPPSTSVILTTTASTEGTSGDTGHTMAVTTQGSTPATTEISVTPSTQKMSPVSTFSTSTQEITTLSQSQHTGGMKTTRNPQTTGTTEVTTTLSASSSDHPTSSPESTPGNTAPRTTETSTTTTTKVLMTSLQQKLPTGSTLGTSTQELTTLPQSQHTGIMKTTSRTQTTTPTEVTTRTLSASSSDHRQAETSSQTTLSPDTTTTSHAPRESSPPSTSVILTHGHREGTSGDTGHTMAVTTQGSTPATTEISVTPSTQKMSPVSTFSTSTQEITTLSQSQHTGGMKTTRNPQRTTPTEVTTSTLSASSSDQVQVETTSRATLSPDTTTTSHAPSVSSSSPSPPSTEGTSVDTGLTTAVTTQDSTPATTQGSLTSSSQTLSTVSPLSTSTQETSTQELTSSQSQHTGSMKTTHNPQTTRNTEVTTTLSASSSDQVQVETTSQTTLSDATTTSHAPRESSSPPSTSDILTTMASTEGTSGDTGHTMAVTTQGSTPATTEISVTPSTQKMSPVSTFSTSTQEITTLSQSQHTGGMKTTRNPQTTGTTEVTTTLSASSSDQVQAETSSQTTLSPDTTTTSHAPRESSSPPSTSDMLTTTASTEGTSGDTGHTTAVTTQGSIPATTQLSTTFASQKMSTVSTPTTSSIQELSTLPQSQHTGSMEISSRPQTTSVTSTLSSSPSGSTPVQTRSVTSSSDERTNPTSSGVSNTSPATTEVLTPTSSPESTPGNTAPRTTETSTTTTTKVLMTSLQQKLPTGSTLGTSTPTEVTTTLSASSSDQVQVETTSQTTLSPDATTTSHAPRESSSPPSTSVILTTMASTEGTSGDTGHTTAVTDQGSTPATTEISVTPSTQKMSTVSTLVTSTQELTSSQSQRTGSMGTSSKPQATTPTEVTTSTLSSFSRGSLFSARNCCLQTKKPPLPAVVCLPDPSSVPSLMHSSKPQATTPTEVTTSTLSSFSRGSTQTQTVSWETSSSGKITAPSTSSRRTPSVATSDIFTTTDSTSGNAGHTLLTGSHSVITSRVASTTLGRLSTVAHRQSTQRSSTHSQSYLTESMGASSTSETSLLTEATTETSLCLFTWTHCDRDLLSWTSSSGLTTKTDNDRSTALSATSLTLPAPSTSTASRSTVPPAPLPPDQGISLFQIGFPLGSLCGIPSILQITVRSFSPSQTTMSSPTPTHLKEASQEGSVCHSGHSGVMLISLAPGEPYFRTTTSHFTMSSTSLIRKVESLINEFTSDWSFKPSDTEVTWVNVPAYPAQGRTLGANTYQAILSTDGSRSYALFLYQSGGMRWDVTQGLYNRVLMGFSSGDGYFENSPLIFRPAVEKYRPDRFLTPNYGSGDSRSTGYTGRCGPTTGSSVCSGWKVSLSSPAGAGTRFPALAPGSRDFGSGSSTQVCGAGSYAASLRAGRVLYVWHLGEFREGWRMHSPWQFDEDEGRHRTGLAAGTTSPLSASSTSSGGPELVVLGTRPPRPAWTFGDPHITTLDNAKYTFNGLGYFLLVQAQDRNSSFLLEGRTAQTDSANATNFIAFAAQYNTSSLKSPITVQWFLEPNDTIRVVHNNQTVAFNTSDTEDLPVFNATGVLLIQNGSQVSANFDGTVTISVIALSNILHASSSLSEEYRNHTKGLLGVWNDNPEDDFRMPNGSTIPSNTSEETLFHYGMTSETNGIGLLGVRTDPLPSEFTPIFLSQLWNKSGAGEDLISGCNEDAQCKFDILATGNRDIGQSTNSILRTFRHVNGTLNQYPPPIHYSSKIQAYKGREQWPLRSPATLRMSYSASPTSAVAFELFENGSLHVDTNIPRRTYLEILARDVKTNLSSVLQPETVACFCSKEEQCLYNETSKEGNSSTEVTSCKCDGNSFGRLCEHSKDLCTEPCFPNVDCIPGKGCQACPPNMTGDGRHCVAVEISEFCQNHSCPVNYCYNHGHCDISGPPDCQPTCTCAPAFTGNRCFLAGNNFTPIIYKELPLRTITLSLREDENASNADVNASVANVLENLDMRAFLSNSLVELIRTSPGAPVLGKPIHHWKVVSHFKYRPRGPLIHYLNNQLISAVMEAFLLQARQERRKRSGEARKNVRFFPISRADVQDGMALNLSMLDEYFTCDGYKGYHLVYSPQDGVTCVSPCSEGYCHNGGQCKHLPDGPQCTCATFSIYTSWGERCEHLSVKLGAFFGILFGALGALLLLAILACVVFHFCGCSMNKFSYPLDSEL.

Residues 1 to 30 form the signal peptide; the sequence is MRGPHGVSWRVPWLCLSCLCSCLLLLPVNT. Residues 32–46 show a composition bias toward low complexity; that stretch reads TTSAPKTSTALPSST. Disordered regions lie at residues 32–760, 773–1036, 1072–1130, 1171–1197, and 1233–1269; these read TTSA…QGSI, QKMS…TTST, VPSL…TPSV, STVAHRQSTQRSSTHSQSYLTESMGAS, and SGLTTKTDNDRSTALSATSLTLPAPSTSTASRSTVPP. Polar residues predominate over residues 47–100; sequence NPSQMTSQVSNPTASSYRMTKNTGQASPMVTSSSITTLPQSQHTGSMKTTRNPQ. The interval 81–1006 is variable number of tandem repeats (VNTR); it reads ITTLPQSQHT…VSTLVTSTQE (926 aa). Low complexity-rich tracts occupy residues 101 to 116 and 123 to 137; these read TTGTTEVTTTLSASSS and TTSQTTLSPDTTTTS. An O-linked (GalNAc...) threonine glycan is attached at Thr-133. Positions 142 to 225 are enriched in polar residues; sequence ESSSPPSTSV…GGMKTTRNPQ (84 aa). The span at 226–273 shows a compositional bias: low complexity; it reads TTGTTEVTTTLSASSSDHPTSSPESTPGNTAPRTTETSTTTTTKVLMT. Residues 274-305 are compositionally biased toward polar residues; the sequence is SLQQKLPTGSTLGTSTQELTTLPQSQHTGIMK. 2 stretches are compositionally biased toward low complexity: residues 306-322 and 335-349; these read TTSRTQTTTPTEVTTRT and TSSQTTLSPDTTTTS. Residues 373-436 are compositionally biased toward polar residues; the sequence is SGDTGHTMAV…GMKTTRNPQR (64 aa). 2 O-linked (GalNAc...) threonine glycosylation sites follow: Thr-391 and Thr-392. Over residues 437–446 the composition is skewed to low complexity; the sequence is TTPTEVTTST. A compositionally biased stretch (polar residues) spans 447–468; the sequence is LSASSSDQVQVETTSRATLSPD. Residues 469–492 show a composition bias toward low complexity; the sequence is TTTTSHAPSVSSSSPSPPSTEGTS. Thr-470 is a glycosylation site (O-linked (GalNAc...) threonine). Residue Ser-479 is glycosylated (O-linked (GalNAc...) serine). Polar residues predominate over residues 493–509; the sequence is VDTGLTTAVTTQDSTPA. Over residues 510–546 the composition is skewed to low complexity; it reads TTQGSLTSSSQTLSTVSPLSTSTQETSTQELTSSQSQ. Over residues 547 to 580 the composition is skewed to polar residues; the sequence is HTGSMKTTHNPQTTRNTEVTTTLSASSSDQVQVE. Residues 581-594 are compositionally biased toward low complexity; that stretch reads TTSQTTLSDATTTS. Polar residues predominate over residues 599 to 682; the sequence is ESSSPPSTSD…GGMKTTRNPQ (84 aa). Composition is skewed to low complexity over residues 683-698 and 705-719; these read TTGTTEVTTTLSASSS and TSSQTTLSPDTTTTS. 2 stretches are compositionally biased toward polar residues: residues 724–760 and 773–807; these read ESSSPPSTSDMLTTTASTEGTSGDTGHTTAVTTQGSI and QKMSTVSTPTTSSIQELSTLPQSQHTGSMEISSRP. Residues 808–828 show a composition bias toward low complexity; the sequence is QTTSVTSTLSSSPSGSTPVQT. Polar residues predominate over residues 829-868; sequence RSVTSSSDERTNPTSSGVSNTSPATTEVLTPTSSPESTPG. A compositionally biased stretch (low complexity) spans 869 to 915; sequence NTAPRTTETSTTTTTKVLMTSLQQKLPTGSTLGTSTPTEVTTTLSAS. Residues 916 to 994 show a composition bias toward polar residues; it reads SSDQVQVETT…ISVTPSTQKM (79 aa). The span at 995–1015 shows a compositional bias: low complexity; that stretch reads STVSTLVTSTQELTSSQSQRT. A compositionally biased stretch (polar residues) spans 1016–1026; it reads GSMGTSSKPQA. Over residues 1027-1036 the composition is skewed to low complexity; it reads TTPTEVTTST. Over residues 1072-1083 the composition is skewed to polar residues; it reads VPSLMHSSKPQA. Positions 1084–1096 are enriched in low complexity; the sequence is TTPTEVTTSTLSS. Polar residues predominate over residues 1097–1116; that stretch reads FSRGSTQTQTVSWETSSSGK. Low complexity-rich tracts occupy residues 1118–1130, 1175–1188, and 1233–1267; these read TAPSTSSRRTPSV, HRQSTQRSSTHSQS, and SGLTTKTDNDRSTALSATSLTLPAPSTSTASRSTV. The NIDO domain occupies 1332 to 1492; the sequence is GHSGVMLISL…TGYTGRCGPT (161 aa). The interval 1574-1597 is disordered; it reads GRHRTGLAAGTTSPLSASSTSSGG. The segment covering 1580 to 1597 has biased composition (low complexity); that stretch reads LAAGTTSPLSASSTSSGG. The 196-residue stretch at 1609 to 1804 folds into the VWFD domain; that stretch reads RPAWTFGDPH…HYGMTSETNG (196 aa). N-linked (GlcNAc...) asparagine glycans are attached at residues Asn-1644, Asn-1660, Asn-1672, Asn-1689, Asn-1698, Asn-1704, Asn-1715, Asn-1724, Asn-1759, Asn-1780, Asn-1787, Asn-1829, Asn-1874, Asn-1926, Asn-1951, Asn-1974, Asn-1981, Asn-2029, and Asn-2048. Residues 2047 to 2086 enclose the EGF-like 1 domain; that stretch reads QNHSCPVNYCYNHGHCDISGPPDCQPTCTCAPAFTGNRCF. 3 disulfide bridges follow: Cys-2051/Cys-2062, Cys-2056/Cys-2074, and Cys-2076/Cys-2085. Asn-2114 and Asn-2121 each carry an N-linked (GlcNAc...) asparagine glycan. Residues 2173-2193 form a helical membrane-spanning segment; sequence GPLIHYLNNQLISAVMEAFLL. A glycan (N-linked (GlcNAc...) asparagine) is linked at Asn-2227. An EGF-like 2 domain is found at 2256 to 2295; that stretch reads VSPCSEGYCHNGGQCKHLPDGPQCTCATFSIYTSWGERCE. 3 cysteine pairs are disulfide-bonded: Cys-2259/Cys-2270, Cys-2264/Cys-2279, and Cys-2281/Cys-2294. Residues 2301-2321 form a helical membrane-spanning segment; sequence LGAFFGILFGALGALLLLAIL.

In terms of assembly, a heterodimeric complex, composed of a mucin-4 alpha chain and a cysteine-rich transmembrane mucin-4 beta chain. Mucin-4 beta chain interacts with ERBB2 via the EGF-like domain 1. In nonpolarized cells, associates with ERBB2 and ERBB3. Post-translationally, proteolytically cleaved into 2 subunits, mucin-4 alpha chain and mucin-4 beta chain. In terms of processing, mucin-4 alpha subunit is highly O-glycosylated. Mucin-4 beta subunit is predominantly N-glycosylated. Expression is developmentally regulated in the mammary gland, dramatically increases in the lactating gland compared with the virgin mammary gland, while decreasing again during mammary gland involution. Expressed in 13762 ascites cells. Overexpressed in some aggressive mammary tumors. Overexpression seems to block cell-cell and cell-matrix interactions to protect tumor cells from immune surveillance, and to promote metastasis.

It is found in the cell membrane. Its subcellular location is the secreted. In terms of biological role, membrane-bound mucin, a family of highly glycosylated proteins that constitute the major component of the mucus, the slimy and viscous secretion covering epithelial surfaces. These glycoproteins play important roles in the protection of the epithelium and are implicated in epithelial renewal and differentiation. Regulates cellular behavior through both anti-adhesive effects on cell-cell and cell-extracellular matrix interactions and its ability to act as an intramembrane ligand for ERBB2. Plays an important role in proliferation and differentiation of epithelial cells by inducing specific phosphorylation of ERBB2. In polarized epithelial cells, segregates ERBB2 and other ERBB receptors and prevents ERBB2 from acting as a coreceptor. The interaction with ERBB2 leads to enhanced expression of CDKN1B. The formation of a MUC4-ERBB2-ERBB3-NRG1 complex leads to down-regulation of CDKN1B, resulting in repression of apoptosis and stimulation of proliferation. Its ability to promote tumor growth may be mainly due to repression of apoptosis as opposed to proliferation. This is Mucin-4 (Muc4) from Rattus norvegicus (Rat).